A 163-amino-acid chain; its full sequence is Biotin carboxyl carrier protein of acetyl-CoA carboxylase (163 aa).

Residues 85–161 (GDFIVSPLVG…QFGSKLFRIV (77 aa)) form the Biotinyl-binding domain. K127 bears the N6-biotinyllysine mark.

In terms of assembly, homodimer.

The protein operates within lipid metabolism; fatty acid biosynthesis. This protein is a component of the acetyl coenzyme A carboxylase complex; first, biotin carboxylase catalyzes the carboxylation of the carrier protein and then the transcarboxylase transfers the carboxyl group to form malonyl-CoA. This chain is Biotin carboxyl carrier protein of acetyl-CoA carboxylase (accB), found in Chlamydia muridarum (strain MoPn / Nigg).